The chain runs to 445 residues: Exodeoxyribonuclease 7 large subunit (445 aa).

This sequence belongs to the XseA family. Heterooligomer composed of large and small subunits.

It localises to the cytoplasm. The catalysed reaction is Exonucleolytic cleavage in either 5'- to 3'- or 3'- to 5'-direction to yield nucleoside 5'-phosphates.. Its function is as follows. Bidirectionally degrades single-stranded DNA into large acid-insoluble oligonucleotides, which are then degraded further into small acid-soluble oligonucleotides. The sequence is that of Exodeoxyribonuclease 7 large subunit from Limosilactobacillus reuteri (strain DSM 20016) (Lactobacillus reuteri).